A 218-amino-acid polypeptide reads, in one-letter code: Cytochrome b6 (218 aa).

The helical transmembrane segment at 35–55 threads the bilayer; it reads IFYCLGGITLVCFLIQFATGF. Residue cysteine 38 participates in heme c binding. Residues histidine 89 and histidine 103 each coordinate heme b. The next 3 membrane-spanning stretches (helical) occupy residues 93–113, 119–139, and 189–209; these read ASMM…TGGF, LTWV…VTGY, and LHTF…FLMI. The heme b site is built by histidine 190 and histidine 205.

This sequence belongs to the cytochrome b family. PetB subfamily. In terms of assembly, the 4 large subunits of the cytochrome b6-f complex are cytochrome b6, subunit IV (17 kDa polypeptide, PetD), cytochrome f and the Rieske protein, while the 4 small subunits are PetG, PetL, PetM and PetN. The complex functions as a dimer. Heme b serves as cofactor. Requires heme c as cofactor.

Its subcellular location is the cellular thylakoid membrane. Component of the cytochrome b6-f complex, which mediates electron transfer between photosystem II (PSII) and photosystem I (PSI), cyclic electron flow around PSI, and state transitions. In Prochlorococcus marinus (strain MIT 9211), this protein is Cytochrome b6.